The following is a 128-amino-acid chain: Large ribosomal subunit protein bL12 (128 aa).

It belongs to the bacterial ribosomal protein bL12 family. Homodimer. Part of the ribosomal stalk of the 50S ribosomal subunit. Forms a multimeric L10(L12)X complex, where L10 forms an elongated spine to which 2 to 4 L12 dimers bind in a sequential fashion. Binds GTP-bound translation factors.

Its function is as follows. Forms part of the ribosomal stalk which helps the ribosome interact with GTP-bound translation factors. Is thus essential for accurate translation. The protein is Large ribosomal subunit protein bL12 of Phenylobacterium zucineum (strain HLK1).